A 752-amino-acid polypeptide reads, in one-letter code: DNA topoisomerase 4 subunit A (752 aa).

The region spanning 31-494 (LPFIGDGLKP…EAKAMSEHDM (464 aa)) is the Topo IIA-type catalytic domain. Residue Y120 is the O-(5'-phospho-DNA)-tyrosine intermediate of the active site. Disordered regions lie at residues 472 to 492 (YGDDRRSPLQEREEAKAMSEH) and 718 to 752 (TGERGRRGTLMRGLQRIDRVEIDSPRRASSGDSEE). Composition is skewed to basic and acidic residues over residues 473 to 492 (GDDRRSPLQEREEAKAMSEH) and 732 to 743 (QRIDRVEIDSPR).

Belongs to the type II topoisomerase GyrA/ParC subunit family. ParC type 1 subfamily. As to quaternary structure, heterotetramer composed of ParC and ParE.

It is found in the cell membrane. The catalysed reaction is ATP-dependent breakage, passage and rejoining of double-stranded DNA.. Its function is as follows. Topoisomerase IV is essential for chromosome segregation. It relaxes supercoiled DNA. Performs the decatenation events required during the replication of a circular DNA molecule. This Escherichia coli O157:H7 protein is DNA topoisomerase 4 subunit A.